Here is a 114-residue protein sequence, read N- to C-terminus: Beta-microseminoprotein (114 aa).

The signal sequence occupies residues 1-20; that stretch reads MNVLLGGFVIFATFVTLCNA. Disulfide bonds link Cys-22–Cys-70, Cys-38–Cys-62, Cys-57–Cys-93, Cys-60–Cys-69, and Cys-84–Cys-107.

This sequence belongs to the beta-microseminoprotein family. Homodimer; Interacts with PI16.

It localises to the secreted. The chain is Beta-microseminoprotein (MSMB) from Macaca mulatta (Rhesus macaque).